The following is a 123-amino-acid chain: Small ribosomal subunit protein uS12 (123 aa).

The tract at residues 1-26 (MPTLNQLVRKPRKRPVAKSKVPALDA) is disordered. Aspartate 89 is modified (3-methylthioaspartic acid). A disordered region spans residues 104–123 (TAGVKNRKQSRSKYGAKRPK). A compositionally biased stretch (basic residues) spans 108-123 (KNRKQSRSKYGAKRPK).

This sequence belongs to the universal ribosomal protein uS12 family. In terms of assembly, part of the 30S ribosomal subunit. Contacts proteins S8 and S17. May interact with IF1 in the 30S initiation complex.

Its function is as follows. With S4 and S5 plays an important role in translational accuracy. Functionally, interacts with and stabilizes bases of the 16S rRNA that are involved in tRNA selection in the A site and with the mRNA backbone. Located at the interface of the 30S and 50S subunits, it traverses the body of the 30S subunit contacting proteins on the other side and probably holding the rRNA structure together. The combined cluster of proteins S8, S12 and S17 appears to hold together the shoulder and platform of the 30S subunit. The sequence is that of Small ribosomal subunit protein uS12 from Acidithiobacillus ferrooxidans (strain ATCC 23270 / DSM 14882 / CIP 104768 / NCIMB 8455) (Ferrobacillus ferrooxidans (strain ATCC 23270)).